Reading from the N-terminus, the 327-residue chain is MNKLISWKPRASIHNLFIRAKIINNIRIFFINRGLLEVETPVMSHTTVPDIYLFPFQTNLYFLEKVPEKGVPMYLITSPEYHMKRLLAAGSGPIFQICHSFRNQEYGNYHNPEFTLLEWYRPYYNMVDIMDEVNIFLQTIIHCDSAEMLSYQQVFRLHVGIDPLLAELDELNQVLVKFNLSSTISLYNDRDKLLDFLFLMLVRPHLGNNKPVFIYNFPASQSLLAELNSDDHRVAERFEVYFHGIELANGSRELTDADLQRERFMQENNKQVAMNRPPRLIDEQLLAALECGLPSCSGVALGIDRLLMLTLKAKHISEVMAFSVTDA.

Position 78 to 80 (78 to 80 (SPE)) interacts with substrate. Residues 102–104 (RNQ) and N111 contribute to the ATP site. Y120 contributes to the substrate binding site. 246–247 (EL) is an ATP binding site. E253 serves as a coordination point for substrate. An ATP-binding site is contributed by G302.

This sequence belongs to the class-II aminoacyl-tRNA synthetase family. EpmA subfamily. In terms of assembly, homodimer.

It carries out the reaction D-beta-lysine + L-lysyl-[protein] + ATP = N(6)-((3R)-3,6-diaminohexanoyl)-L-lysyl-[protein] + AMP + diphosphate + H(+). In terms of biological role, with EpmB is involved in the beta-lysylation step of the post-translational modification of translation elongation factor P (EF-P). Catalyzes the ATP-dependent activation of (R)-beta-lysine produced by EpmB, forming a lysyl-adenylate, from which the beta-lysyl moiety is then transferred to the epsilon-amino group of a conserved specific lysine residue in EF-P. The sequence is that of Elongation factor P--(R)-beta-lysine ligase from Baumannia cicadellinicola subsp. Homalodisca coagulata.